The sequence spans 420 residues: Hemocyanin 2-c chain (420 aa).

Positions 1–12 (DFGHSKKIRKNV) are enriched in basic residues. The tract at residues 1 to 20 (DFGHSKKIRKNVHSLTAEEQ) is disordered. Residue histidine 46 coordinates Cu cation. Cysteines 52 and 63 form a disulfide. Positions 66, 73, 185, 189, and 216 each coordinate Cu cation. Disulfide bonds link cysteine 175-cysteine 242 and cysteine 335-cysteine 342.

O-glycosylated. In terms of tissue distribution, hemolymph.

The protein resides in the secreted. It is found in the extracellular space. Functionally, hemocyanins are copper-containing oxygen carriers occurring freely dissolved in the hemolymph of many mollusks and arthropods. The chain is Hemocyanin 2-c chain from Megathura crenulata (Giant keyhole limpet).